Reading from the N-terminus, the 21-residue chain is Fibrinogen beta chain (21 aa).

Q1 bears the Pyrrolidone carboxylic acid mark. Residues Q1–E11 show a composition bias toward acidic residues. The disordered stretch occupies residues Q1–R21. O-linked (GalNAc...) threonine glycosylation is present at T4. At Y6 the chain carries Sulfotyrosine. Positions D12–R21 are enriched in basic and acidic residues.

Heterohexamer; disulfide linked. Contains 2 sets of 3 non-identical chains (alpha, beta and gamma). The 2 heterotrimers are in head to head conformation with the N-termini in a small central domain. Conversion of fibrinogen to fibrin is triggered by thrombin, which cleaves fibrinopeptides A and B from alpha and beta chains, and thus exposes the N-terminal polymerization sites responsible for the formation of the soft clot.

The protein resides in the secreted. Its function is as follows. Cleaved by the protease thrombin to yield monomers which, together with fibrinogen alpha (FGA) and fibrinogen gamma (FGG), polymerize to form an insoluble fibrin matrix. Fibrin has a major function in hemostasis as one of the primary components of blood clots. In addition, functions during the early stages of wound repair to stabilize the lesion and guide cell migration during re-epithelialization. Was originally thought to be essential for platelet aggregation, based on in vitro studies using anticoagulated blood. However subsequent studies have shown that it is not absolutely required for thrombus formation in vivo. Enhances expression of SELP in activated platelets. Maternal fibrinogen is essential for successful pregnancy. Fibrin deposition is also associated with infection, where it protects against IFNG-mediated hemorrhage. May also facilitate the antibacterial immune response via both innate and T-cell mediated pathways. The protein is Fibrinogen beta chain (FGB) of Cervus elaphus (Red deer).